A 271-amino-acid polypeptide reads, in one-letter code: MSQHPGADGAAPVFADAVDARRAIRAGRFRGHTSGLVPAHAQGNLMILPRAMAEDFHRFCQQNPKPCPILGVSRPGARALPTLGADLDLATDVPGYRVYEGGELAAQLPDLTGVWREDLVTFVLGCSFSFEAGLIEAGIPLRHVALGRNVAMYRTSIETQPSGPFHGPLVVSMRPMKAADAIKAVQVTARMPAVHGAPIHLGDPGLIGIRDLARPDFGDPVPIEPDELPVFWACGVTPQAVAMAARLPLCITHAPGHMLITDLLNRDLPFL.

It belongs to the D-glutamate cyclase family.

The sequence is that of Putative hydro-lyase Mrad2831_3350 from Methylobacterium radiotolerans (strain ATCC 27329 / DSM 1819 / JCM 2831 / NBRC 15690 / NCIMB 10815 / 0-1).